A 418-amino-acid chain; its full sequence is (+)-T-muurolol synthase ((2E,6E)-farnesyl diphosphate cyclizing) (418 aa).

Positions 83 and 88 each coordinate Mg(2+). Positions 83 to 88 (DDEYCD) match the DDXXXD motif motif. Arg179 provides a ligand contact to substrate. Mg(2+)-binding residues include Asn225 and Ser229. Lys232 contacts substrate. Mg(2+) is bound at residue Glu233. Substrate is bound at residue 312-313 (RY). Residues 354 to 418 (LPEPGSDGAD…QQSTWRREHR (65 aa)) are disordered. Residues 402–412 (ASRSSGLQQST) show a composition bias toward polar residues.

The protein belongs to the terpene synthase family. It depends on Mg(2+) as a cofactor.

It catalyses the reaction (2E,6E)-farnesyl diphosphate + H2O = (+)-T-muurolol + diphosphate. The protein operates within secondary metabolite biosynthesis; terpenoid biosynthesis. Functionally, catalyzes the conversion of (2E,6E)-farnesyl diphosphate (FPP) into (+)-T-muurolol via a 1,10-cyclization, which requires isomerization of FPP to nerolidyl diphosphate (NPP) and then abstraction of the pyrophosphate from intermediate NPP leading to a (E,Z)-germacradienyl (helminthogermacradienyl) cation. The chain is (+)-T-muurolol synthase ((2E,6E)-farnesyl diphosphate cyclizing) from Streptomyces clavuligerus.